A 136-amino-acid chain; its full sequence is Aspartate 1-decarboxylase (136 aa).

Serine 25 (schiff-base intermediate with substrate; via pyruvic acid) is an active-site residue. A Pyruvic acid (Ser) modification is found at serine 25. A substrate-binding site is contributed by threonine 57. Tyrosine 58 (proton donor) is an active-site residue. 73–75 (GAA) serves as a coordination point for substrate.

The protein belongs to the PanD family. Heterooctamer of four alpha and four beta subunits. It depends on pyruvate as a cofactor. Post-translationally, is synthesized initially as an inactive proenzyme, which is activated by self-cleavage at a specific serine bond to produce a beta-subunit with a hydroxyl group at its C-terminus and an alpha-subunit with a pyruvoyl group at its N-terminus.

The protein localises to the cytoplasm. It catalyses the reaction L-aspartate + H(+) = beta-alanine + CO2. Its pathway is cofactor biosynthesis; (R)-pantothenate biosynthesis; beta-alanine from L-aspartate: step 1/1. Its function is as follows. Catalyzes the pyruvoyl-dependent decarboxylation of aspartate to produce beta-alanine. This is Aspartate 1-decarboxylase from Corynebacterium efficiens (strain DSM 44549 / YS-314 / AJ 12310 / JCM 11189 / NBRC 100395).